Reading from the N-terminus, the 183-residue chain is Large ribosomal subunit protein bL27m (183 aa).

The N-terminal 34 residues, 1–34 (MFLRPTSIPSAVSQIRAQLFAGPSSLASQIQVRW), are a transit peptide targeting the mitochondrion.

It belongs to the bacterial ribosomal protein bL27 family.

The protein resides in the mitochondrion. The chain is Large ribosomal subunit protein bL27m (RPL27) from Cryptococcus neoformans var. neoformans serotype D (strain B-3501A) (Filobasidiella neoformans).